We begin with the raw amino-acid sequence, 910 residues long: Staphylococcal nuclease domain-containing protein 1 (910 aa).

Ala-2 is subject to N-acetylalanine. TNase-like domains are found at residues 18–166 (TVQR…MWSE), 193–328 (KPVN…IWRD), and 341–496 (KQFV…LHSK). Phosphothreonine is present on Thr-103. Lys-193 is subject to N6-acetyllysine. Phosphothreonine occurs at positions 235 and 240. Short sequence motifs (nuclear localization signal) lie at residues 321–325 (RRLRI) and 388–392 (KKLRP). At Ser-426 the chain carries Phosphoserine. A Glycyl lysine isopeptide (Lys-Gly) (interchain with G-Cter in SUMO2) cross-link involves residue Lys-513. Residues 525 to 660 (GRSEAVVEYV…KQRKEKVWAH (136 aa)) form the TNase-like 4 domain. The residue at position 641 (Lys-641) is an N6-acetyllysine. Ser-645 is modified (phosphoserine). Residues 729–787 (APRRGEFCIAKFVDGEWYRARVEKVESPAKVHVFYIDYGNREILPSTRLGTLPPAFSTR) enclose the Tudor domain. Thr-779 is modified (phosphothreonine). Phosphoserine is present on residues Ser-785 and Ser-909.

Forms a ternary complex with STAT6 and POLR2A. Associates with the RNA-induced silencing complex (RISC). Interacts with the RISC components AGO2, FMR1 and TNRC6A. Interacts with GTF2E1 and GTF2E2. Interacts with PIM1. Interacts with STAT5. Interacts with SYT11 (via C2 2 domain); the interaction with SYT11 is direct. Post-translationally, phosphorylated by PIM1 in vitro.

It localises to the cytoplasm. The protein localises to the nucleus. It is found in the melanosome. It carries out the reaction Endonucleolytic cleavage to nucleoside 3'-phosphates and 3'-phosphooligonucleotide end-products.. Functionally, endonuclease that mediates miRNA decay of both protein-free and AGO2-loaded miRNAs. As part of its function in miRNA decay, regulates mRNAs involved in G1-to-S phase transition. Functions as a bridging factor between STAT6 and the basal transcription factor. Plays a role in PIM1 regulation of MYB activity. Functions as a transcriptional coactivator for STAT5. This chain is Staphylococcal nuclease domain-containing protein 1 (Snd1), found in Mus musculus (Mouse).